Reading from the N-terminus, the 68-residue chain is MPQLNTTTWLTIITPTLLALFLITQLKLLNSHLHPPTPPKFTKTKPHAKPWELKWTKIYSPHSLPPQY.

A helical transmembrane segment spans residues 8-24; the sequence is TWLTIITPTLLALFLIT. Position 54 is an N6-acetyllysine; alternate (lysine 54). An N6-succinyllysine; alternate modification is found at lysine 54. The residue at position 57 (lysine 57) is an N6-acetyllysine.

This sequence belongs to the ATPase protein 8 family. As to quaternary structure, F-type ATPases have 2 components, CF(1) - the catalytic core - and CF(0) - the membrane proton channel. Component of an ATP synthase complex composed of ATP5PB, ATP5MC1, ATP5F1E, ATP5PD, ATP5ME, ATP5PF, ATP5MF, MT-ATP6, MT-ATP8, ATP5F1A, ATP5F1B, ATP5F1D, ATP5F1C, ATP5PO, ATP5MG, ATP5MK and ATP5MJ. Interacts with PRICKLE3.

It localises to the mitochondrion membrane. In terms of biological role, mitochondrial membrane ATP synthase (F(1)F(0) ATP synthase or Complex V) produces ATP from ADP in the presence of a proton gradient across the membrane which is generated by electron transport complexes of the respiratory chain. F-type ATPases consist of two structural domains, F(1) - containing the extramembraneous catalytic core and F(0) - containing the membrane proton channel, linked together by a central stalk and a peripheral stalk. During catalysis, ATP synthesis in the catalytic domain of F(1) is coupled via a rotary mechanism of the central stalk subunits to proton translocation. Part of the complex F(0) domain. Minor subunit located with subunit a in the membrane. The chain is ATP synthase protein 8 (MT-ATP8) from Pongo pygmaeus (Bornean orangutan).